A 313-amino-acid chain; its full sequence is MSITIDTSVDIDLPTPPQSNGSQKRNLLLAPPSVAAHEEKLRDVFSTFDRSSTDLQMFDRLSAGFVSLPPNTYDLVLVLTDAQSDEAVRLLTRDVYTALVPAMKAGARLQLQQGSLGASEGLEAILAGLVEKDGGFEKPVQEAAVPLKLGGRKKKDKTNGVNGVQNGVATNGASTNGVGMFDPAQNNDDELIDEDALLSDDDLKRPLPRPQNCVPETAKKRRRPCKDCTCGLASQLEEEDRAREAKAAQDLNILKLNTDDLNDELDFTVQGKTSSCNSCSLGDAFRCSSCPYIGLPPFKPGEEVKIMNDMVQL.

Disordered stretches follow at residues 1–25 (MSIT…SQKR) and 151–187 (GRKK…AQNN). The N-terminal SAM-like domain stretch occupies residues 20 to 145 (NGSQKRNLLL…FEKPVQEAAV (126 aa)). Residues 146–203 (PLKLGGRKKKDKTNGVNGVQNGVATNGASTNGVGMFDPAQNNDDELIDEDALLSDDDL) are linker. The span at 159–177 (NGVNGVQNGVATNGASTNG) shows a compositional bias: polar residues. Positions 213, 225, 228, and 230 each coordinate [2Fe-2S] cluster. A fe-S binding site A region spans residues 213-230 (CVPETAKKRRRPCKDCTC). [4Fe-4S] cluster-binding residues include Cys-276, Cys-279, Cys-287, and Cys-290. Short sequence motifs (cx2C motif) lie at residues 276 to 279 (CNSC) and 287 to 290 (CSSC). The tract at residues 276 to 290 (CNSCSLGDAFRCSSC) is fe-S binding site B.

Belongs to the anamorsin family. In terms of assembly, monomer. Interacts with tah18. Interacts with mia40. [2Fe-2S] cluster is required as a cofactor. [4Fe-4S] cluster serves as cofactor.

Its subcellular location is the cytoplasm. It localises to the mitochondrion intermembrane space. Functionally, component of the cytosolic iron-sulfur (Fe-S) protein assembly (CIA) machinery required for the maturation of extramitochondrial Fe-S proteins. Part of an electron transfer chain functioning in an early step of cytosolic Fe-S biogenesis, facilitating the de novo assembly of a [4Fe-4S] cluster on the scaffold complex cfd1-nbp35. Electrons are transferred to dre2 from NADPH via the FAD- and FMN-containing protein tah18. Tah18-dre2 are also required for the assembly of the diferric tyrosyl radical cofactor of ribonucleotide reductase (RNR), probably by providing electrons for reduction during radical cofactor maturation in the catalytic small subunit rnr2. This is Fe-S cluster assembly protein dre2 from Aspergillus oryzae (strain ATCC 42149 / RIB 40) (Yellow koji mold).